The following is a 331-amino-acid chain: Serine racemase (331 aa).

ATP contacts are provided by serine 34 and lysine 54. Lysine 59 (proton acceptor) is an active-site residue. N6-(pyridoxal phosphate)lysine is present on lysine 59. Threonine 81 is a binding site for Ca(2+). Serine 84 (proton acceptor) is an active-site residue. Asparagine 86 provides a ligand contact to pyridoxal 5'-phosphate. Tyrosine 121 provides a ligand contact to ATP. Residue aspartate 178 coordinates Mg(2+). 3 residues coordinate pyridoxal 5'-phosphate: glycine 186, glycine 187, and glycine 188. Positions 210, 214, and 216 each coordinate Ca(2+). Residues glutamate 210, alanine 214, and aspartate 216 each coordinate Mg(2+). Positions 210, 214, and 216 each coordinate Mn(2+). Residue lysine 278 coordinates ATP. Serine 314 provides a ligand contact to pyridoxal 5'-phosphate. Asparagine 317 contributes to the ATP binding site.

This sequence belongs to the serine/threonine dehydratase family. As to quaternary structure, homodimer. The cofactor is Mg(2+). Requires Mn(2+) as cofactor. Ca(2+) serves as cofactor. Pyridoxal 5'-phosphate is required as a cofactor. As to expression, expressed in the whole plant.

The catalysed reaction is L-serine = D-serine. It carries out the reaction L-serine = pyruvate + NH4(+). The enzyme catalyses D-serine = pyruvate + NH4(+). Inhibited by hydroxylamine. Racemase activity is enhanced by Ca(2+), Mg(2+), Mn(2+), and is decreased by Ni(2+), Zn(2+). Hydratase activity is enhanced by Ca(2+), Mg(2+), Mn(2+), Cu(2+), Fe(2+), Ni(2+). Its function is as follows. Catalyzes the synthesis of D-serine from L-serine. Has dehydratase activity towards both L-serine and D-serine. Displays high substrate specificity for L-serine, whereas L-alanine, L-arginine, and L-glutamine were poor substrates. In Arabidopsis thaliana (Mouse-ear cress), this protein is Serine racemase (SR).